Here is a 107-residue protein sequence, read N- to C-terminus: Large ribosomal subunit protein bL21 (107 aa).

It belongs to the bacterial ribosomal protein bL21 family. As to quaternary structure, part of the 50S ribosomal subunit. Contacts protein L20.

Functionally, this protein binds to 23S rRNA in the presence of protein L20. This Pseudothermotoga lettingae (strain ATCC BAA-301 / DSM 14385 / NBRC 107922 / TMO) (Thermotoga lettingae) protein is Large ribosomal subunit protein bL21.